The primary structure comprises 316 residues: tRNA dimethylallyltransferase (316 aa).

An ATP-binding site is contributed by Gly12–Thr19. Residue Thr14 to Thr19 coordinates substrate. 2 interaction with substrate tRNA regions span residues Asp37–Leu40 and Gln161–Arg165.

It belongs to the IPP transferase family. As to quaternary structure, monomer. It depends on Mg(2+) as a cofactor.

It catalyses the reaction adenosine(37) in tRNA + dimethylallyl diphosphate = N(6)-dimethylallyladenosine(37) in tRNA + diphosphate. Functionally, catalyzes the transfer of a dimethylallyl group onto the adenine at position 37 in tRNAs that read codons beginning with uridine, leading to the formation of N6-(dimethylallyl)adenosine (i(6)A). This chain is tRNA dimethylallyltransferase, found in Idiomarina loihiensis (strain ATCC BAA-735 / DSM 15497 / L2-TR).